We begin with the raw amino-acid sequence, 532 residues long: Chaperonin GroEL 2 (532 aa).

ATP is bound by residues 30-33 (TLGP), Lys51, 87-91 (DGTTT), Gly415, 479-481 (NAA), and Asp495.

The protein belongs to the chaperonin (HSP60) family. As to quaternary structure, forms a cylinder of 14 subunits composed of two heptameric rings stacked back-to-back. Interacts with the co-chaperonin GroES.

Its subcellular location is the cytoplasm. It catalyses the reaction ATP + H2O + a folded polypeptide = ADP + phosphate + an unfolded polypeptide.. Its function is as follows. Together with its co-chaperonin GroES, plays an essential role in assisting protein folding. The GroEL-GroES system forms a nano-cage that allows encapsulation of the non-native substrate proteins and provides a physical environment optimized to promote and accelerate protein folding. This chain is Chaperonin GroEL 2, found in Vibrio parahaemolyticus serotype O3:K6 (strain RIMD 2210633).